The chain runs to 308 residues: Maspardin (308 aa).

Positions 87 to 159 constitute an AB hydrolase-1 domain; that stretch reads FCDGFRKLLD…NSFWLMPAFM (73 aa). A Phosphoserine modification is found at S304.

Belongs to the AB hydrolase superfamily. As to quaternary structure, interacts with CD4. Interacts with ALDH16A1. In terms of tissue distribution, expressed in cell lines FT.1 and in a L cell fibroblast derivative (at protein level).

The protein resides in the cytoplasm. Functionally, may play a role as a negative regulatory factor in CD4-dependent T-cell activation. This is Maspardin (Spg21) from Mus musculus (Mouse).